The chain runs to 333 residues: Ketol-acid reductoisomerase (NADP(+)) (333 aa).

Positions 6 to 186 (TRVYTECDAD…GALRAGAIQT (181 aa)) constitute a KARI N-terminal Rossmann domain. NADP(+) contacts are provided by residues 29-32 (YGSQ), lysine 52, serine 55, serine 57, and 87-90 (DPAQ). Histidine 112 is a catalytic residue. Glycine 138 lines the NADP(+) pocket. The region spanning 187–332 (TFTEETETDL…ARLRALFSWS (146 aa)) is the KARI C-terminal knotted domain. Mg(2+)-binding residues include aspartate 195, glutamate 199, glutamate 231, and glutamate 235. Serine 256 serves as a coordination point for substrate.

The protein belongs to the ketol-acid reductoisomerase family. Requires Mg(2+) as cofactor.

It catalyses the reaction (2R)-2,3-dihydroxy-3-methylbutanoate + NADP(+) = (2S)-2-acetolactate + NADPH + H(+). The enzyme catalyses (2R,3R)-2,3-dihydroxy-3-methylpentanoate + NADP(+) = (S)-2-ethyl-2-hydroxy-3-oxobutanoate + NADPH + H(+). The protein operates within amino-acid biosynthesis; L-isoleucine biosynthesis; L-isoleucine from 2-oxobutanoate: step 2/4. It participates in amino-acid biosynthesis; L-valine biosynthesis; L-valine from pyruvate: step 2/4. Functionally, involved in the biosynthesis of branched-chain amino acids (BCAA). Catalyzes an alkyl-migration followed by a ketol-acid reduction of (S)-2-acetolactate (S2AL) to yield (R)-2,3-dihydroxy-isovalerate. In the isomerase reaction, S2AL is rearranged via a Mg-dependent methyl migration to produce 3-hydroxy-3-methyl-2-ketobutyrate (HMKB). In the reductase reaction, this 2-ketoacid undergoes a metal-dependent reduction by NADPH to yield (R)-2,3-dihydroxy-isovalerate. This is Ketol-acid reductoisomerase (NADP(+)) from Tropheryma whipplei (strain TW08/27) (Whipple's bacillus).